The following is a 1240-amino-acid chain: Structural polyprotein (1240 aa).

The interval 1 to 35 (MFPYPTLNYPPMAPINPMAYRDPNPPRQVAPFRPP) is necessary for nucleocapsid assembly and virus assembly. Residues 1–102 (MFPYPTLNYP…RKPKPGKRQR (102 aa)) form a disordered region. Positions 23-34 (PNPPRQVAPFRP) are enriched in pro residues. The segment at 36-69 (LAAQIEDLRRSIANLTLKQRAPNPPAGPPAKRKK) is host transcription inhibition. Positions 43–50 (LRRSIANL) match the Supraphysiological nuclear export signal motif. A glycan (N-linked (GlcNAc...) asparagine; by host) is linked at asparagine 49. Residues 65 to 102 (AKRKKPAPKPKPAQAKKKRPPPPAKKQKRKPKPGKRQR) show a composition bias toward basic residues. A Nuclear localization signal motif is present at residues 66–70 (KRKKP). The segment at 82–112 (KRPPPPAKKQKRKPKPGKRQRMCMKLESDKT) is binding to the viral RNA. Residues 97–111 (PGKRQRMCMKLESDK) are ribosome-binding. Residue serine 109 is modified to Phosphoserine. One can recognise a Peptidase S3 domain in the interval 111–260 (KTFPIMLNGQ…KDTPEGSEPW (150 aa)). Threonine 112 is subject to Phosphothreonine. Residues histidine 137, aspartate 159, and serine 211 each act as charge relay system in the active site. The tract at residues 261–272 (SLATVMCVLANI) is functions as an uncleaved signal peptide for the precursor of protein E3/E2. The Extracellular portion of the chain corresponds to 261-682 (SLATVMCVLA…HEVVVYYYNR (422 aa)). N-linked (GlcNAc...) asparagine; by host glycans are attached at residues asparagine 271 and asparagine 638. A helical transmembrane segment spans residues 683–703 (YPLTTIIGLCTCVAIIMVSCV). Topologically, residues 704–743 (HPCGSFAGLRNLCITPYKLAPNAQVPILLALLCCIKPTRA) are cytoplasmic. Residues cysteine 706, cysteine 716, cysteine 736, and cysteine 737 are each lipidated (S-palmitoyl cysteine; by host). A transient transmembrane before p62-6K protein processing region spans residues 715–735 (LCITPYKLAPNAQVPILLALL). Topologically, residues 744–758 (DDTLQVLNYLWNNNQ) are extracellular. The helical transmembrane segment at 759-779 (NFFWMQTLIPLAALIVCMRIV) threads the bilayer. A topological domain (cytoplasmic) is located at residue arginine 780. A helical membrane pass occupies residues 781–801 (CLFCCGPAFLLVCGAWAAAYE). The Extracellular segment spans residues 802-1216 (HTAVMPNKVG…WSWLKVLVGG (415 aa)). An N-linked (GlcNAc...) asparagine; by host glycan is attached at asparagine 834. Disulfide bonds link cysteine 848/cysteine 913, cysteine 861/cysteine 893, cysteine 862/cysteine 895, and cysteine 867/cysteine 877. The E1 fusion peptide loop stretch occupies residues 883–900 (VYPFMWGGAYCFCDTENT). N-linked (GlcNAc...) asparagine; by host glycosylation is present at asparagine 933. Cystine bridges form between cysteine 1059-cysteine 1071, cysteine 1101-cysteine 1176, and cysteine 1106-cysteine 1180. Residues 1217–1237 (TSAFIVLGLIATAVVALVLFF) form a helical membrane-spanning segment. Topologically, residues 1238–1240 (HRH) are cytoplasmic.

In terms of assembly, part of a tetrameric complex composed of host CRM1, host importin alpha/beta dimer and the viral capsid; this complex blocks the receptor-mediated transport through the nuclear pore. Interacts with host phosphatase PPP1CA; this interaction dephosphorylates the capsid protein, which increases its ability to bind to the viral genome. Interacts with host karyopherin KPNA4; this interaction allows the nuclear import of the viral capsid protein. Interacts with spike glycoprotein E2. Interacts with host IRAK1; the interaction leads to inhibition of IRAK1-dependent signaling. The precursor of protein E3/E2 and E1 form a heterodimer shortly after synthesis. As to quaternary structure, the precursor of protein E3/E2 and E1 form a heterodimer shortly after synthesis. Processing of the precursor of protein E3/E2 into E2 and E3 results in a heterodimer of the spike glycoproteins E2 and E1. Spike at virion surface are constituted of three E2-E1 heterodimers. After target cell attachment and endocytosis, E1 change conformation to form homotrimers. Interacts with 6K protein. In terms of assembly, processing of the precursor of protein E3/E2 into E2 and E3 results in a heterodimer of the spike glycoproteins E2 and E1. Spike at virion surface are constituted of three E2-E1 heterodimers. Interacts with 6K protein. Interacts with spike glycoprotein E1. Interacts with spike glycoprotein E2. In terms of processing, structural polyprotein: Specific enzymatic cleavages in vivo yield mature proteins. Capsid protein is auto-cleaved during polyprotein translation, unmasking a signal peptide at the N-terminus of the precursor of E3/E2. The remaining polyprotein is then targeted to the host endoplasmic reticulum, where host signal peptidase cleaves it into pE2, 6K and E1 proteins. pE2 is further processed to mature E3 and E2 by host furin in trans-Golgi vesicle. Phosphorylated on serine and threonine residues. Post-translationally, palmitoylated via thioester bonds. These palmitoylations may induce disruption of the C-terminus transmembrane. This would result in the reorientation of E2 C-terminus from lumenal to cytoplasmic side. In terms of processing, N-glycosylated. Palmitoylated via thioester bonds.

It is found in the virion. The protein localises to the host cytoplasm. The protein resides in the host cell membrane. It localises to the host nucleus. Its subcellular location is the virion membrane. The catalysed reaction is Autocatalytic release of the core protein from the N-terminus of the togavirus structural polyprotein by hydrolysis of a -Trp-|-Ser- bond.. Its function is as follows. Forms an icosahedral capsid with a T=4 symmetry composed of 240 copies of the capsid protein surrounded by a lipid membrane through which penetrate 80 spikes composed of trimers of E1-E2 heterodimers. The capsid protein binds to the viral RNA genome at a site adjacent to a ribosome binding site for viral genome translation following genome release. Possesses a protease activity that results in its autocatalytic cleavage from the nascent structural protein. Following its self-cleavage, the capsid protein transiently associates with ribosomes, and within several minutes the protein binds to viral RNA and rapidly assembles into icosahedric core particles. The resulting nucleocapsid eventually associates with the cytoplasmic domain of the spike glycoprotein E2 at the cell membrane, leading to budding and formation of mature virions. In case of infection, new virions attach to target cells and after clathrin-mediated endocytosis their membrane fuses with the host endosomal membrane. This leads to the release of the nucleocapsid into the cytoplasm, followed by an uncoating event necessary for the genomic RNA to become accessible. The uncoating might be triggered by the interaction of capsid proteins with ribosomes. Binding of ribosomes would release the genomic RNA since the same region is genomic RNA-binding and ribosome-binding. Specifically inhibits interleukin-1 receptor-associated kinase 1/IRAK1-dependent signaling during viral entry, representing a means by which the alphaviruses may evade innate immune detection and activation prior to viral gene expression. Inhibits host transcription. Forms a tetrameric complex with XPO1/CRM1 and the nuclear import receptor importin. This complex blocks the central channel of host nuclear pores thereby inhibiting the receptor-mediated nuclear transport and thus the host mRNA and rRNA transcription. The inhibition of transcription is linked to a cytopathic effect on the host cell. In terms of biological role, provides the signal sequence for the translocation of the precursor of protein E3/E2 to the host endoplasmic reticulum. Furin-cleaved E3 remains associated with spike glycoprotein E1 and mediates pH protection of the latter during the transport via the secretory pathway. After virion release from the host cell, the assembly protein E3 is gradually released in the extracellular space. Functionally, plays a role in viral attachment to target host cell, by binding to the cell receptor. Synthesized as a p62 precursor which is processed by furin at the cell membrane just before virion budding, giving rise to E2-E1 heterodimer. The p62-E1 heterodimer is stable, whereas E2-E1 is unstable and dissociate at low pH. p62 is processed at the last step, presumably to avoid E1 fusion activation before its final export to cell surface. E2 C-terminus contains a transitory transmembrane that would be disrupted by palmitoylation, resulting in reorientation of the C-terminal tail from lumenal to cytoplasmic side. This step is critical since E2 C-terminus is involved in budding by interacting with capsid proteins. This release of E2 C-terminus in cytoplasm occurs lately in protein export, and precludes premature assembly of particles at the endoplasmic reticulum membrane. Constitutive membrane protein involved in virus glycoprotein processing, cell permeabilization, and the budding of viral particles. Disrupts the calcium homeostasis of the cell, probably at the endoplasmic reticulum level. This leads to cytoplasmic calcium elevation. Because of its lipophilic properties, the 6K protein is postulated to influence the selection of lipids that interact with the transmembrane domains of the glycoproteins, which, in turn, affects the deformability of the bilayer required for the extreme curvature that occurs as budding proceeds. Present in low amount in virions, about 3% compared to viral glycoproteins. Its function is as follows. Class II viral fusion protein. Fusion activity is inactive as long as E1 is bound to E2 in mature virion. After virus attachment to target cell and endocytosis, acidification of the endosome would induce dissociation of E1/E2 heterodimer and concomitant trimerization of the E1 subunits. This E1 trimer is fusion active, and promotes release of viral nucleocapsid in cytoplasm after endosome and viral membrane fusion. Efficient fusion requires the presence of cholesterol and sphingolipid in the target membrane. Fusion is optimal at levels of about 1 molecule of cholesterol per 2 molecules of phospholipids, and is specific for sterols containing a 3-beta-hydroxyl group. The chain is Structural polyprotein from Eastern equine encephalitis virus (strain va33[ten broeck]) (EEEV).